A 174-amino-acid polypeptide reads, in one-letter code: UPF0398 protein YfdB (174 aa).

Belongs to the UPF0398 family.

In Lactococcus lactis subsp. lactis (strain IL1403) (Streptococcus lactis), this protein is UPF0398 protein YfdB (yfdB).